A 557-amino-acid polypeptide reads, in one-letter code: Formate--tetrahydrofolate ligase (557 aa).

Thr66 to Ser73 provides a ligand contact to ATP.

The protein belongs to the formate--tetrahydrofolate ligase family.

It catalyses the reaction (6S)-5,6,7,8-tetrahydrofolate + formate + ATP = (6R)-10-formyltetrahydrofolate + ADP + phosphate. It participates in one-carbon metabolism; tetrahydrofolate interconversion. This is Formate--tetrahydrofolate ligase from Clostridium botulinum (strain Loch Maree / Type A3).